Here is a 95-residue protein sequence, read N- to C-terminus: Aspartyl/glutamyl-tRNA(Asn/Gln) amidotransferase subunit C (95 aa).

Belongs to the GatC family. In terms of assembly, heterotrimer of A, B and C subunits.

It catalyses the reaction L-glutamyl-tRNA(Gln) + L-glutamine + ATP + H2O = L-glutaminyl-tRNA(Gln) + L-glutamate + ADP + phosphate + H(+). The enzyme catalyses L-aspartyl-tRNA(Asn) + L-glutamine + ATP + H2O = L-asparaginyl-tRNA(Asn) + L-glutamate + ADP + phosphate + 2 H(+). Its function is as follows. Allows the formation of correctly charged Asn-tRNA(Asn) or Gln-tRNA(Gln) through the transamidation of misacylated Asp-tRNA(Asn) or Glu-tRNA(Gln) in organisms which lack either or both of asparaginyl-tRNA or glutaminyl-tRNA synthetases. The reaction takes place in the presence of glutamine and ATP through an activated phospho-Asp-tRNA(Asn) or phospho-Glu-tRNA(Gln). The sequence is that of Aspartyl/glutamyl-tRNA(Asn/Gln) amidotransferase subunit C from Thermodesulfovibrio yellowstonii (strain ATCC 51303 / DSM 11347 / YP87).